We begin with the raw amino-acid sequence, 429 residues long: Protein FAM98B (429 aa).

A disordered region spans residues 304–429 (RVPDRGGRPN…GGGGGGYRRY (126 aa)). Over residues 305–314 (VPDRGGRPNE) the composition is skewed to basic and acidic residues. A compositionally biased stretch (gly residues) spans 332–429 (GGRGGWGGGG…GGGGGGYRRY (98 aa)).

It belongs to the FAM98 family. As to quaternary structure, homodimer. Component of a tRNA-splicing ligase complex. Interacts with FAM98A.

It is found in the nucleus. Its subcellular location is the cytoplasm. Functionally, positively stimulates PRMT1-induced protein arginine dimethylated arginine methylation. The sequence is that of Protein FAM98B (Fam98b) from Mus musculus (Mouse).